Here is an 868-residue protein sequence, read N- to C-terminus: Leucine--tRNA ligase (868 aa).

A 'HIGH' region motif is present at residues 42-52 (PYPSGKLHMGH). Residues 627–631 (KMSKS) carry the 'KMSKS' region motif. Lys-630 contacts ATP.

It belongs to the class-I aminoacyl-tRNA synthetase family.

It localises to the cytoplasm. The catalysed reaction is tRNA(Leu) + L-leucine + ATP = L-leucyl-tRNA(Leu) + AMP + diphosphate. This is Leucine--tRNA ligase from Pseudomonas putida (strain W619).